A 230-amino-acid polypeptide reads, in one-letter code: Alpha-S1-casein (230 aa).

An N-terminal signal peptide occupies residues 1–15 (MKLLILTCLVAVALA). Ser-33, Ser-83, Ser-85, Ser-86, Ser-87, and Ser-88 each carry phosphoserine. Basic and acidic residues predominate over residues 60 to 83 (DELKDTRNEPTEDHIMEDTERKES). Disordered regions lie at residues 60–103 (DELK…DILK) and 211–230 (TPEGIASEDGGKTDVMPQWW). The span at 84–96 (GSSSSEEVVSSTT) shows a compositional bias: low complexity.

Belongs to the alpha-casein family. Mammary gland specific. Secreted in milk.

The protein resides in the secreted. In terms of biological role, important role in the capacity of milk to transport calcium phosphate. The polypeptide is Alpha-S1-casein (CSN1S1) (Camelus dromedarius (Dromedary)).